The following is a 637-amino-acid chain: Extracellular metalloproteinase MEP (637 aa).

Residues 1 to 21 form the signal peptide; the sequence is MRSVDSLLLLGLTGLASQANA. Residues 22 to 246 constitute a propeptide that is removed on maturation; sequence HPAKRQPNDS…VVGVVDYVAD (225 aa). Asparagine 288 carries N-linked (GlcNAc...) asparagine glycosylation. Histidine 431 contributes to the Zn(2+) binding site. Residue glutamate 432 is part of the active site. Position 435 (histidine 435) interacts with Zn(2+).

The protein belongs to the peptidase M36 family. It depends on Zn(2+) as a cofactor.

It is found in the secreted. Functionally, secreted metalloproteinase that probably acts as a virulence factor. Cleaves Z.mays Endochitinase A (CHIA) between residues 'Gly-29' and 'Cys-30'. This chain is Extracellular metalloproteinase MEP (MEP), found in Fusarium vanettenii (strain ATCC MYA-4622 / CBS 123669 / FGSC 9596 / NRRL 45880 / 77-13-4) (Fusarium solani subsp. pisi).